The following is a 519-amino-acid chain: Xylose import ATP-binding protein XylG (519 aa).

ABC transporter domains lie at 6–245 (LTMR…VGRE) and 262–507 (LDVR…LKPA). 38-45 (GENGAGKS) contributes to the ATP binding site.

This sequence belongs to the ABC transporter superfamily. Xylose importer (TC 3.A.1.2.4) family. As to quaternary structure, the complex is composed of two ATP-binding proteins (XylG), two transmembrane proteins (XylH) and a solute-binding protein (XylF).

The protein localises to the cell inner membrane. The catalysed reaction is D-xylose(out) + ATP + H2O = D-xylose(in) + ADP + phosphate + H(+). Its function is as follows. Part of the ABC transporter complex XylFGH involved in xylose import. Responsible for energy coupling to the transport system. The protein is Xylose import ATP-binding protein XylG of Burkholderia cenocepacia (strain HI2424).